Here is a 429-residue protein sequence, read N- to C-terminus: Enolase (429 aa).

Q163 is a (2R)-2-phosphoglycerate binding site. E205 functions as the Proton donor in the catalytic mechanism. Mg(2+)-binding residues include D242, E285, and D312. Residues K337, R366, S367, and K388 each coordinate (2R)-2-phosphoglycerate. K337 functions as the Proton acceptor in the catalytic mechanism.

The protein belongs to the enolase family. Requires Mg(2+) as cofactor.

It is found in the cytoplasm. The protein localises to the secreted. It localises to the cell surface. The catalysed reaction is (2R)-2-phosphoglycerate = phosphoenolpyruvate + H2O. It participates in carbohydrate degradation; glycolysis; pyruvate from D-glyceraldehyde 3-phosphate: step 4/5. Catalyzes the reversible conversion of 2-phosphoglycerate (2-PG) into phosphoenolpyruvate (PEP). It is essential for the degradation of carbohydrates via glycolysis. This is Enolase from Azoarcus sp. (strain BH72).